Consider the following 694-residue polypeptide: PTS system fructose-specific EIIABC component (694 aa).

The PTS EIIA type-2 domain maps to 4–149 (PLLSAELFFN…NGLINLIDSF (146 aa)). Catalysis depends on His-68, which acts as the Tele-phosphohistidine intermediate; for EIIA activity. His-68 is modified (phosphohistidine; by HPr). The PTS EIIB type-2 domain occupies 179 to 275 (FVAVTACPTG…PQTVYDQVVK (97 aa)). The active-site Phosphocysteine intermediate; for EIIB activity is the Cys-185. The residue at position 185 (Cys-185) is a Phosphocysteine; by EIIA. In terms of domain architecture, PTS EIIC type-2 spans 310–687 (IYRAILSGVS…NLLVVRKKTK (378 aa)). 10 helical membrane passes run 318–338 (VSYM…AFLI), 364–384 (GGLS…FALV), 390–410 (LPGF…IDIV), 422–442 (VSSG…LIIV), 461–481 (ILFI…VINI), 502–522 (LAPL…GGPV), 542–562 (VAMA…AIAA), 576–596 (AAYA…IPFV), 602–622 (IMLA…GAFA), and 655–675 (GVGL…GIII).

The protein resides in the cell membrane. The catalysed reaction is D-fructose(out) + N(pros)-phospho-L-histidyl-[protein] = D-fructose 1-phosphate(in) + L-histidyl-[protein]. Its function is as follows. The phosphoenolpyruvate-dependent sugar phosphotransferase system (sugar PTS), a major carbohydrate active transport system, catalyzes the phosphorylation of incoming sugar substrates concomitantly with their translocation across the cell membrane. This system is involved in fructose transport. In Mycoplasma pneumoniae (strain ATCC 29342 / M129 / Subtype 1) (Mycoplasmoides pneumoniae), this protein is PTS system fructose-specific EIIABC component.